Reading from the N-terminus, the 297-residue chain is uncharacterized protein (297 aa).

3 disordered regions span residues 19-133 (NEVD…EEKE), 147-214 (AEDD…VGIA), and 226-277 (EKTS…SKEA). A compositionally biased stretch (basic and acidic residues) spans 41–52 (EEPKNEKEKHDD). Positions 77–87 (PAEDDEEDEEF) are enriched in acidic residues. Residues 88-101 (PSQSYGPSIPSNFR) are compositionally biased toward polar residues. Composition is skewed to basic and acidic residues over residues 147 to 161 (AEDDEKNFQPKREEW) and 236 to 268 (IHQKKRDEKVKDAGYAQGERRPFDREKDMEVRG).

This is an uncharacterized protein from Caenorhabditis elegans.